Consider the following 122-residue polypeptide: Small ribosomal subunit protein uS13 (122 aa).

A disordered region spans residues 95 to 122 (GLPVRGQRTKTNARTRKGPKKTIAGKKK).

This sequence belongs to the universal ribosomal protein uS13 family. As to quaternary structure, part of the 30S ribosomal subunit. Forms a loose heterodimer with protein S19. Forms two bridges to the 50S subunit in the 70S ribosome.

In terms of biological role, located at the top of the head of the 30S subunit, it contacts several helices of the 16S rRNA. In the 70S ribosome it contacts the 23S rRNA (bridge B1a) and protein L5 of the 50S subunit (bridge B1b), connecting the 2 subunits; these bridges are implicated in subunit movement. Contacts the tRNAs in the A and P-sites. In Corynebacterium aurimucosum (strain ATCC 700975 / DSM 44827 / CIP 107346 / CN-1) (Corynebacterium nigricans), this protein is Small ribosomal subunit protein uS13.